We begin with the raw amino-acid sequence, 550 residues long: 4-coumarate--CoA ligase-like 8 (550 aa).

Residues S207, S208, G209, T210, T211, and K215 each coordinate ATP. F253 contributes to the (E)-4-coumaroyl-AMP binding site. CoA is bound at residue R274. An SBD1 region spans residues D276–Q347. The (E)-4-coumaroyl-AMP site is built by G325, Q347, G348, and T352. Q347, G348, T352, D430, and R445 together coordinate ATP. Positions G348 to Y412 are SBD2. (E)-4-coumaroyl-AMP-binding residues include K447 and K451. Residues K453 and G454 each coordinate CoA. K536 is a binding site for ATP. A Microbody targeting signal motif is present at residues S548–I550.

It belongs to the ATP-dependent AMP-binding enzyme family. Mg(2+) is required as a cofactor.

The protein localises to the peroxisome. The enzyme catalyses (E)-4-coumarate + ATP + CoA = (E)-4-coumaroyl-CoA + AMP + diphosphate. It carries out the reaction (E)-4-coumarate + ATP + H(+) = (E)-4-coumaroyl-AMP + diphosphate. It catalyses the reaction (E)-4-coumaroyl-AMP + CoA = (E)-4-coumaroyl-CoA + AMP + H(+). Its function is as follows. Carboxylate--CoA ligase that may use 4-coumarate as substrate. Follows a two-step reaction mechanism, wherein the carboxylate substrate first undergoes adenylation by ATP, followed by a thioesterification in the presence of CoA to yield the final CoA thioester. This Arabidopsis thaliana (Mouse-ear cress) protein is 4-coumarate--CoA ligase-like 8.